The primary structure comprises 76 residues: Protein sprouty homolog 1 (76 aa).

Positions 1 to 52 (NPCSCSQSHCCSRYLCMGAMSLFLPCLLCYPPAKGCLKLCRGCYDRVNRPGC) constitute an SPR domain.

The protein belongs to the sprouty family. In terms of tissue distribution, brain and interlimb region.

It is found in the cytoplasm. The protein localises to the membrane. In terms of biological role, inhibits fibroblast growth factor (FGF)-induced retinal lens fiber differentiation. Inhibits TGFB-induced epithelial-to-mesenchymal transition in lens epithelial cells. This is Protein sprouty homolog 1 (SPRY1) from Gallus gallus (Chicken).